We begin with the raw amino-acid sequence, 89 residues long: Large ribosomal subunit protein bL27 (89 aa).

The disordered stretch occupies residues 1 to 21 (MAHKKAGGSSRNGRDSKGKRL).

This sequence belongs to the bacterial ribosomal protein bL27 family.

The protein is Large ribosomal subunit protein bL27 of Bradyrhizobium diazoefficiens (strain JCM 10833 / BCRC 13528 / IAM 13628 / NBRC 14792 / USDA 110).